A 757-amino-acid polypeptide reads, in one-letter code: MGSPSLYSARKTTLALAVALSFAWQAPVFAHGGEAHMVPMDKTLKEFGADVQWDDYAQLFTLIKDGAYVKVKPGAQTAIVNGQPLALQVPVVMKDNKAWVSDTFINDVFQSGLDQTFQVEKRPHPLNALTADEIKQAVEIVKASADFKPNTRFTEISLLPPDKEAVWAFALENKPVDQPRKADVIMLDGKHIIEAVVDLQNNKLLSWQPIKDAHGMVLLDDFASVQNIINNSEEFAAAVKKRGITDAKKVITTPLTVGYFDGKDGLKQDARLLKVISYLDVGDGNYWAHPIENLVAVVDLEQKKIVKIEEGPVVPVPMTARPFDGRDRVAPAVKPMQIIEPEGKNYTITGDMIHWRNWDFHLSMNSRVGPMISTVTYNDNGTKRKVMYEGSLGGMIVPYGDPDIGWYFKAYLDSGDYGMGTLTSPIARGKDAPSNAVLLNETIADYTGVPMEIPRAIAVFERYAGPEYKHQEMGQPNVSTERRELVVRWISTVGNYDYIFDWIFHENGTIGIDAGATGIEAVKGVKAKTMHDETAKDDTRYGTLIDHNIVGTTHQHIYNFRLDLDVDGENNSLVAMDPVVKPNTAGGPRTSTMQVNQYNIGNEQDAAQKFDPGTIRLLSNPNKENRMGNPVSYQIIPYAGGTHPVAKGAQFAPDEWIYHRLSFMDKQLWVTRYHPGERFPEGKYPNRSTHDTGLGQYSKDNESLDNTDAVVWMTTGTTHVARAEEWPIMPTEWVHTLLKPWNFFDETPTLGALKKDK.

Residues Met-1–Ala-30 form the signal peptide. Residues Tyr-411 to Leu-422 and Val-493 to Tyr-498 contribute to the substrate site. Asp-413 (proton acceptor) is an active-site residue. Tyr-496 serves as the catalytic Schiff-base intermediate with substrate; via topaquinone. A 2',4',5'-topaquinone modification is found at Tyr-496. Residues His-554 and His-556 each coordinate Cu cation. Residues Asp-563, Leu-564, Asp-565, Glu-603, Tyr-697, Asp-700, Glu-702, Asp-708, and Ala-709 each contribute to the Ca(2+) site. Asp-563 contributes to the Mn(2+) binding site. Residue Asp-565 coordinates Mn(2+). Residues Pro-680–Asn-701 are disordered. Asp-708 lines the Mn(2+) pocket. His-719 contacts Cu cation.

Belongs to the copper/topaquinone oxidase family. Homodimer. Cu cation serves as cofactor. It depends on Zn(2+) as a cofactor. Ca(2+) is required as a cofactor. Requires L-topaquinone as cofactor. The cofactor is Mn(2+). Post-translationally, topaquinone (TPQ) is generated by copper-dependent autoxidation of a specific tyrosyl residue.

Its subcellular location is the periplasm. The catalysed reaction is a primary methyl amine + O2 + H2O = an aldehyde + H2O2 + NH4(+). It catalyses the reaction 2-phenylethylamine + O2 + H2O = 2-phenylacetaldehyde + H2O2 + NH4(+). The protein operates within amino-acid degradation; L-phenylalanine degradation; phenylacetate from L-phenylalanine: step 2/3. Its activity is regulated as follows. Inhibited by 2-hydrazinopyridine. In terms of biological role, the enzyme prefers aromatic over aliphatic amines. This is Primary amine oxidase (tynA) from Escherichia coli (strain K12).